The primary structure comprises 296 residues: Protoheme IX farnesyltransferase (296 aa).

Residues Met-1–Val-9 lie on the Cytoplasmic side of the membrane. The helical transmembrane segment at Thr-10–Leu-28 threads the bilayer. Residues Ala-29–Pro-37 are Periplasmic-facing. A helical transmembrane segment spans residues Leu-38 to Phe-56. Topologically, residues Asn-57 to Lys-78 are cytoplasmic. Residues Gly-79–Gly-97 form a helical membrane-spanning segment. At Phe-98–Pro-107 the chain is on the periplasmic side. Residues Leu-108–Leu-126 form a helical membrane-spanning segment. Topologically, residues Tyr-127–Pro-197 are cytoplasmic. Residues Val-198–Phe-216 form a helical membrane-spanning segment. The Periplasmic portion of the chain corresponds to Ala-217–Tyr-228. A helical transmembrane segment spans residues Ala-229–Met-247. The Cytoplasmic segment spans residues Ala-248–Ser-268. Residues Ile-269–Asp-287 form a helical membrane-spanning segment. The Periplasmic segment spans residues Ser-288–Trp-296.

It belongs to the UbiA prenyltransferase family. Protoheme IX farnesyltransferase subfamily.

Its subcellular location is the cell inner membrane. The catalysed reaction is heme b + (2E,6E)-farnesyl diphosphate + H2O = Fe(II)-heme o + diphosphate. Its pathway is porphyrin-containing compound metabolism; heme O biosynthesis; heme O from protoheme: step 1/1. Its function is as follows. Converts heme B (protoheme IX) to heme O by substitution of the vinyl group on carbon 2 of heme B porphyrin ring with a hydroxyethyl farnesyl side group. This chain is Protoheme IX farnesyltransferase, found in Shigella flexneri.